The primary structure comprises 513 residues: ATP synthase subunit alpha (513 aa).

Residue 169–176 (GDRQIGKT) coordinates ATP.

It belongs to the ATPase alpha/beta chains family. In terms of assembly, F-type ATPases have 2 components, CF(1) - the catalytic core - and CF(0) - the membrane proton channel. CF(1) has five subunits: alpha(3), beta(3), gamma(1), delta(1), epsilon(1). CF(0) has three main subunits: a(1), b(2) and c(9-12). The alpha and beta chains form an alternating ring which encloses part of the gamma chain. CF(1) is attached to CF(0) by a central stalk formed by the gamma and epsilon chains, while a peripheral stalk is formed by the delta and b chains.

It is found in the cell inner membrane. The catalysed reaction is ATP + H2O + 4 H(+)(in) = ADP + phosphate + 5 H(+)(out). In terms of biological role, produces ATP from ADP in the presence of a proton gradient across the membrane. The alpha chain is a regulatory subunit. In Francisella tularensis subsp. tularensis (strain WY96-3418), this protein is ATP synthase subunit alpha.